The primary structure comprises 82 residues: RNA-binding protein YbxF (82 aa).

Belongs to the eukaryotic ribosomal protein eL8 family.

The protein is RNA-binding protein YbxF of Geobacillus stearothermophilus (Bacillus stearothermophilus).